The following is a 391-amino-acid chain: Glycerol-3-phosphate dehydrogenase [NAD(+)] 1 (391 aa).

NAD(+) contacts are provided by residues 41 to 46 (GSGNWG), phenylalanine 129, lysine 152, and alanine 185. Lysine 152 is a binding site for substrate. The active-site Proton acceptor is the lysine 245. Arginine 310 and glutamine 339 together coordinate NAD(+). 310–311 (RN) provides a ligand contact to substrate.

The protein belongs to the NAD-dependent glycerol-3-phosphate dehydrogenase family.

It localises to the cytoplasm. It catalyses the reaction sn-glycerol 3-phosphate + NAD(+) = dihydroxyacetone phosphate + NADH + H(+). In Saccharomyces uvarum (Yeast), this protein is Glycerol-3-phosphate dehydrogenase [NAD(+)] 1 (GPD1).